The chain runs to 308 residues: MRPRITFRPLHGILLLDKPAGLSSNNALQAARRLLRAEKGGHTGSLDPLATGLLPLCFGEATKIAGLLLGSAKAYDADIVLGVTTDTDDADGQPLRERPVPALSEAALQAALAPFIGRIQQQAPIYSALKQGGEPLYAKARRGEVIEAPVREVEVHAITLTSYASPRLRLRVTCGSGTYIRSLARDLGEALGCGAHIAALRRVWVEPFRTPEMITLEALTALVESGADAAQLLLPVAAGLSDFAQITLDATLVARFRMGQRLRDPAFPEGQVAVFDTDGSPAGLGLVDADGRLSPQRLFNGLNAAAAC.

Residue Asp-47 is the Nucleophile of the active site.

It belongs to the pseudouridine synthase TruB family. Type 1 subfamily.

The catalysed reaction is uridine(55) in tRNA = pseudouridine(55) in tRNA. Functionally, responsible for synthesis of pseudouridine from uracil-55 in the psi GC loop of transfer RNAs. The sequence is that of tRNA pseudouridine synthase B from Xanthomonas campestris pv. campestris (strain B100).